The chain runs to 199 residues: Putative acetyltransferase SAR2635 (199 aa).

The protein belongs to the transferase hexapeptide repeat family.

The protein is Putative acetyltransferase SAR2635 of Staphylococcus aureus (strain MRSA252).